The following is a 61-amino-acid chain: MKFSKIFVFVFAIVFATASVSAAPGNFFKDLEKMGQRVRDAVISAAPAVDTLAKAKALGQG.

An N-terminal signal peptide occupies residues 1–22; that stretch reads MKFSKIFVFVFAIVFATASVSA. Residues 23-24 constitute a propeptide, removed by a dipeptidylpeptidase; that stretch reads AP. Gln60 is subject to Glutamine amide.

This sequence belongs to the cecropin family. As to expression, mainly in fat body. Lower in hemocytes. Not expressed in midguts, malpighian tubules and silk glands.

It is found in the secreted. Cecropins have lytic and antibacterial activity against several Gram-positive and Gram-negative bacteria. The chain is Cecropin-D (CECD) from Bombyx mori (Silk moth).